A 762-amino-acid polypeptide reads, in one-letter code: 5-methyltetrahydropteroyltriglutamate--homocysteine methyltransferase (762 aa).

Residues 17-20 (REWK) and Lys-111 each bind 5-methyltetrahydropteroyltri-L-glutamate. L-homocysteine-binding positions include 435–437 (IGS) and Glu-488. L-methionine-binding positions include 435–437 (IGS) and Glu-488. 5-methyltetrahydropteroyltri-L-glutamate contacts are provided by residues 519–520 (RC) and Trp-565. Residue Asp-603 participates in L-homocysteine binding. Asp-603 contacts L-methionine. 5-methyltetrahydropteroyltri-L-glutamate is bound at residue Glu-609. Residues His-645, Cys-647, and Glu-669 each contribute to the Zn(2+) site. His-698 acts as the Proton donor in catalysis. Zn(2+) is bound at residue Cys-730.

Belongs to the vitamin-B12 independent methionine synthase family. Requires Zn(2+) as cofactor.

It carries out the reaction 5-methyltetrahydropteroyltri-L-glutamate + L-homocysteine = tetrahydropteroyltri-L-glutamate + L-methionine. It functions in the pathway amino-acid biosynthesis; L-methionine biosynthesis via de novo pathway; L-methionine from L-homocysteine (MetE route): step 1/1. Its function is as follows. Catalyzes the transfer of a methyl group from 5-methyltetrahydrofolate to homocysteine resulting in methionine formation. The polypeptide is 5-methyltetrahydropteroyltriglutamate--homocysteine methyltransferase (Bacillus thuringiensis (strain Al Hakam)).